A 494-amino-acid chain; its full sequence is Guanosine-5'-triphosphate,3'-diphosphate pyrophosphatase (494 aa).

The protein belongs to the GppA/Ppx family. GppA subfamily.

The enzyme catalyses guanosine 3'-diphosphate 5'-triphosphate + H2O = guanosine 3',5'-bis(diphosphate) + phosphate + H(+). It participates in purine metabolism; ppGpp biosynthesis; ppGpp from GTP: step 2/2. In terms of biological role, catalyzes the conversion of pppGpp to ppGpp. Guanosine pentaphosphate (pppGpp) is a cytoplasmic signaling molecule which together with ppGpp controls the 'stringent response', an adaptive process that allows bacteria to respond to amino acid starvation, resulting in the coordinated regulation of numerous cellular activities. This Citrobacter koseri (strain ATCC BAA-895 / CDC 4225-83 / SGSC4696) protein is Guanosine-5'-triphosphate,3'-diphosphate pyrophosphatase.